Reading from the N-terminus, the 408-residue chain is Aspartate aminotransferase (408 aa).

Residues glycine 45, tryptophan 134, and asparagine 184 each contribute to the L-aspartate site. Lysine 247 is subject to N6-(pyridoxal phosphate)lysine. Residue arginine 382 participates in L-aspartate binding.

The protein belongs to the class-I pyridoxal-phosphate-dependent aminotransferase family. Homodimer. The cofactor is pyridoxal 5'-phosphate.

It localises to the cytoplasm. It catalyses the reaction L-aspartate + 2-oxoglutarate = oxaloacetate + L-glutamate. Catalyzes the reversible conversion of aspartate and 2-oxoglutarate to glutamate and oxaloacetate. Does not have prephenate aminotransferase activity. In Streptomyces avermitilis (strain ATCC 31267 / DSM 46492 / JCM 5070 / NBRC 14893 / NCIMB 12804 / NRRL 8165 / MA-4680), this protein is Aspartate aminotransferase.